A 199-amino-acid polypeptide reads, in one-letter code: MNKFIVFEGIDGCGKTTQAKLIAERLNAKFTFEPTDGKIGKSIREILSGSKCQKETLALLFAADRVEHVSKIEEDLKKSHIVSDRYVYSSIVYQMSQGIPKDFIYTINDYAKTPDLVVLLDVDLNEALKRMESREKEIFEKIEIQKKIKEGYYSLINSENEKFMPTYGFIIIDTTSKSINQVFDEILNAIIDKIPDIIQ.

An ATP-binding site is contributed by 9–16 (GIDGCGKT).

The protein belongs to the thymidylate kinase family.

It carries out the reaction dTMP + ATP = dTDP + ADP. The sequence is that of Probable thymidylate kinase from Methanococcus maripaludis (strain C6 / ATCC BAA-1332).